Consider the following 557-residue polypeptide: MMAAASSPEKLLQLQEVDSSRAGSRILSPILGSSSPGLSHETSQPICIRSPYTDLGHDFTTIPFYSPTIFSYGGPSISECSSVHQSLSASLFWPSHGRVGTPITLHCPQGRSQQGQSAQTPWDSVITTSKSVRRRSQESEESMVSSGGKADLHYCAVCHDYASGYHYGVWSCEGCKAFFKRSIQGHNDYICPATNQCTIDKNRRKSCQACRLRKCYEVGMTKCGIRKERGNYRNSQARRLTRLSSQGKTAEPKGITGPAEGSLNKPEKPALTPEQLIERILEAEPPEIYLVKDAKRPLTEASVMMLLTNLADKELVHMISWAKKIPGFVELSLVDQVHLLECCWLEVLMIGLMWRSVDHPGKLIFCPDLSLSREEGSCVQGFVEIFDMLIAATTRVRELKLQREEYVCLKAMILLNSNMCLSSSDCSEDLQSRSKLLRLLDAMTDALVLAIGKTGLTFRQQYTRLAHLLMLLSHIRHVSNKGMDHLHCMKMKNIVPLYDLLLEMLDAHIMHSSCLPHQPPQQDSKDQSEVPAPLHSSAGGPSNTWTPSSARAGGESQ.

The interval 1-154 is modulating; that stretch reads MMAAASSPEK…SSGGKADLHY (154 aa). 2 consecutive NR C4-type zinc fingers follow at residues 155–175 and 191–215; these read CAVCHDYASGYHYGVWSCEGC and CPATNQCTIDKNRRKSCQACRLRKC. Residues 155 to 220 constitute a DNA-binding region (nuclear receptor); that stretch reads CAVCHDYASG…RLRKCYEVGM (66 aa). The tract at residues 240 to 268 is disordered; the sequence is LTRLSSQGKTAEPKGITGPAEGSLNKPEK. Residues 272-508 form the NR LBD domain; it reads TPEQLIERIL…DLLLEMLDAH (237 aa). The interval 513–557 is disordered; that stretch reads SCLPHQPPQQDSKDQSEVPAPLHSSAGGPSNTWTPSSARAGGESQ. Positions 539 to 557 are enriched in polar residues; sequence GGPSNTWTPSSARAGGESQ.

Belongs to the nuclear hormone receptor family. NR3 subfamily. As to quaternary structure, binds DNA as a homodimer. Can form a heterodimer with ER-alpha.

The protein localises to the nucleus. Binds estrogens with an affinity similar to that of ER-alpha, and activates expression of reporter genes containing estrogen response elements (ERE) in an estrogen-dependent manner. In Oreochromis niloticus (Nile tilapia), this protein is Estrogen receptor beta (esr2).